Reading from the N-terminus, the 427-residue chain is Serine--tRNA ligase (427 aa).

233–235 (TAE) is an L-serine binding site. 264-266 (RSE) is an ATP binding site. Position 287 (E287) interacts with L-serine. 351 to 354 (EISS) contributes to the ATP binding site. L-serine is bound at residue S386.

The protein belongs to the class-II aminoacyl-tRNA synthetase family. Type-1 seryl-tRNA synthetase subfamily. Homodimer. The tRNA molecule binds across the dimer.

The protein resides in the cytoplasm. It catalyses the reaction tRNA(Ser) + L-serine + ATP = L-seryl-tRNA(Ser) + AMP + diphosphate + H(+). It carries out the reaction tRNA(Sec) + L-serine + ATP = L-seryl-tRNA(Sec) + AMP + diphosphate + H(+). Its pathway is aminoacyl-tRNA biosynthesis; selenocysteinyl-tRNA(Sec) biosynthesis; L-seryl-tRNA(Sec) from L-serine and tRNA(Sec): step 1/1. Its function is as follows. Catalyzes the attachment of serine to tRNA(Ser). Is also able to aminoacylate tRNA(Sec) with serine, to form the misacylated tRNA L-seryl-tRNA(Sec), which will be further converted into selenocysteinyl-tRNA(Sec). In Dechloromonas aromatica (strain RCB), this protein is Serine--tRNA ligase.